Consider the following 566-residue polypeptide: Malate synthase, glyoxysomal (566 aa).

Catalysis depends on Arg-182, which acts as the Proton acceptor. Catalysis depends on Asp-467, which acts as the Proton donor. Residues 564–566 (SRL) carry the Microbody targeting signal motif.

Belongs to the malate synthase family.

It is found in the glyoxysome. The catalysed reaction is glyoxylate + acetyl-CoA + H2O = (S)-malate + CoA + H(+). It functions in the pathway carbohydrate metabolism; glyoxylate cycle; (S)-malate from isocitrate: step 2/2. In Cucurbita maxima (Pumpkin), this protein is Malate synthase, glyoxysomal.